The following is a 488-amino-acid chain: Histone deacetylase 2 (488 aa).

Residues 9 to 322 are histone deacetylase; the sequence is KKKVCYYYDG…WTYETAVALD (314 aa). 2 residues coordinate 1D-myo-inositol 1,4,5,6-tetrakisphosphate: Gly28 and Lys32. His142 is a catalytic residue. 3 residues coordinate Zn(2+): Asp177, His179, and Asp265. Arg271 is a binding site for 1D-myo-inositol 1,4,5,6-tetrakisphosphate. The disordered stretch occupies residues 389–488; sequence AVHEDSGDED…GAKSEQLSNP (100 aa). The segment covering 402–417 has biased composition (basic and acidic residues); sequence PDKRISIRASDKRIAC. Residues 418–428 show a composition bias toward acidic residues; that stretch reads DEEFSDSEDEG. Positions 429–481 are enriched in basic and acidic residues; that stretch reads EGGRRNVADHKKGAKKARIEEDKKETEDKKADVKEEDKSKDNSGEKTDTKGAK.

This sequence belongs to the histone deacetylase family. HD type 1 subfamily. Zn(2+) is required as a cofactor.

The protein resides in the nucleus. Its subcellular location is the cytoplasm. The enzyme catalyses N(6)-acetyl-L-lysyl-[histone] + H2O = L-lysyl-[histone] + acetate. It catalyses the reaction N(6)-acetyl-L-lysyl-[protein] + H2O = L-lysyl-[protein] + acetate. The catalysed reaction is N(6)-(2E)-butenoyl-L-lysyl-[protein] + H2O = (2E)-2-butenoate + L-lysyl-[protein]. It carries out the reaction N(6)-(2-hydroxyisobutanoyl)-L-lysyl-[protein] + H2O = 2-hydroxy-2-methylpropanoate + L-lysyl-[protein]. The enzyme catalyses N(6)-[(S)-lactoyl]-L-lysyl-[protein] + H2O = (S)-lactate + L-lysyl-[protein]. Inositol tetraphosphate (1D-myo-inositol 1,4,5,6-tetrakisphosphate) may act as an intermolecular glue between HDAC2 and N-Cor repressor complex components. In terms of biological role, histone deacetylase that catalyzes the deacetylation of lysine residues on the N-terminal part of the core histones (H2A, H2B, H3 and H4). Histone deacetylation gives a tag for epigenetic repression and plays an important role in transcriptional regulation, cell cycle progression and developmental events. Histone deacetylases act via the formation of large multiprotein complexes. Also deacetylates non-histone proteins. In addition to protein deacetylase activity, also acts as a protein-lysine deacylase by recognizing other acyl groups: catalyzes removal of (2E)-butenoyl (crotonyl), lactoyl (lactyl) and 2-hydroxyisobutanoyl (2-hydroxyisobutyryl) acyl groups from lysine residues, leading to protein decrotonylation, delactylation and de-2-hydroxyisobutyrylation, respectively. The polypeptide is Histone deacetylase 2 (HDAC2) (Gallus gallus (Chicken)).